Reading from the N-terminus, the 386-residue chain is Na(+)/H(+) antiporter NhaA (386 aa).

The next 11 helical transmembrane spans lie at 11 to 31, 60 to 80, 96 to 116, 126 to 146, 155 to 175, 180 to 200, 218 to 238, 260 to 280, 293 to 313, 326 to 346, and 358 to 378; these read NDAT…FLAN, LLLW…GLEV, MFPL…YAAF, GWAI…ALLG, MFLM…IALF, LSLI…VLNG, VAVL…GLFI, VSWL…LSGV, ITLG…WLAV, LIDI…SIFI, and LVTL…LVGY.

It belongs to the NhaA Na(+)/H(+) (TC 2.A.33) antiporter family.

It is found in the cell inner membrane. It carries out the reaction Na(+)(in) + 2 H(+)(out) = Na(+)(out) + 2 H(+)(in). In terms of biological role, na(+)/H(+) antiporter that extrudes sodium in exchange for external protons. This is Na(+)/H(+) antiporter NhaA from Erwinia tasmaniensis (strain DSM 17950 / CFBP 7177 / CIP 109463 / NCPPB 4357 / Et1/99).